The following is a 205-amino-acid chain: GTP cyclohydrolase 1 (205 aa).

The Zn(2+) site is built by Cys-95, His-98, and Cys-166.

This sequence belongs to the GTP cyclohydrolase I family. Toroid-shaped homodecamer, composed of two pentamers of five dimers.

It carries out the reaction GTP + H2O = 7,8-dihydroneopterin 3'-triphosphate + formate + H(+). It functions in the pathway cofactor biosynthesis; 7,8-dihydroneopterin triphosphate biosynthesis; 7,8-dihydroneopterin triphosphate from GTP: step 1/1. In Maricaulis maris (strain MCS10) (Caulobacter maris), this protein is GTP cyclohydrolase 1.